The primary structure comprises 469 residues: 3-isopropylmalate dehydratase large subunit (469 aa).

3 residues coordinate [4Fe-4S] cluster: Cys347, Cys407, and Cys410.

The protein belongs to the aconitase/IPM isomerase family. LeuC type 1 subfamily. Heterodimer of LeuC and LeuD. Requires [4Fe-4S] cluster as cofactor.

The catalysed reaction is (2R,3S)-3-isopropylmalate = (2S)-2-isopropylmalate. It participates in amino-acid biosynthesis; L-leucine biosynthesis; L-leucine from 3-methyl-2-oxobutanoate: step 2/4. In terms of biological role, catalyzes the isomerization between 2-isopropylmalate and 3-isopropylmalate, via the formation of 2-isopropylmaleate. This chain is 3-isopropylmalate dehydratase large subunit, found in Photorhabdus laumondii subsp. laumondii (strain DSM 15139 / CIP 105565 / TT01) (Photorhabdus luminescens subsp. laumondii).